A 644-amino-acid polypeptide reads, in one-letter code: Arabinosyltransferase XEG113 (644 aa).

The Cytoplasmic segment spans residues 1-17; that stretch reads MVEGWRNGFRDATNSKP. The helical; Signal-anchor for type II membrane protein transmembrane segment at 18 to 38 threads the bilayer; that stretch reads LFVTIYATVIIGVLVSSFYVF. Residues 39 to 644 lie on the Lumenal side of the membrane; it reads SAIYSPTNGS…QTPEEDHPPL (606 aa). N-linked (GlcNAc...) asparagine glycosylation is found at asparagine 46 and asparagine 70. The short motif at 226–228 is the DXD motif element; that stretch reads DTD. Asparagine 446 and asparagine 542 each carry an N-linked (GlcNAc...) asparagine glycan.

The protein belongs to the glycosyltransferase 77 family.

Its subcellular location is the golgi apparatus membrane. Plays a role in the arabinosylation of cell wall components. Involved in the arabinosylation of extensin proteins in root hair cells. Extensins are structural glycoproteins present in cell walls and its arabinosylation is important for cell elongation, root hair cell development, lateral root development and root hair tip growth. In Arabidopsis thaliana (Mouse-ear cress), this protein is Arabinosyltransferase XEG113.